A 129-amino-acid chain; its full sequence is NADPH-dependent 7-cyano-7-deazaguanine reductase (129 aa).

The Thioimide intermediate role is filled by Cys-43. Asp-50 functions as the Proton donor in the catalytic mechanism. Residues 65-67 and 84-85 contribute to the substrate site; these read VEL and HE.

This sequence belongs to the GTP cyclohydrolase I family. QueF type 1 subfamily.

The protein resides in the cytoplasm. It catalyses the reaction 7-aminomethyl-7-carbaguanine + 2 NADP(+) = 7-cyano-7-deazaguanine + 2 NADPH + 3 H(+). Its pathway is tRNA modification; tRNA-queuosine biosynthesis. Catalyzes the NADPH-dependent reduction of 7-cyano-7-deazaguanine (preQ0) to 7-aminomethyl-7-deazaguanine (preQ1). This Aquifex aeolicus (strain VF5) protein is NADPH-dependent 7-cyano-7-deazaguanine reductase.